A 495-amino-acid chain; its full sequence is Probable cytosol aminopeptidase (495 aa).

Mn(2+) contacts are provided by K266 and D271. The active site involves K278. The Mn(2+) site is built by D289, D348, and E350. R352 is an active-site residue.

It belongs to the peptidase M17 family. Mn(2+) serves as cofactor.

Its subcellular location is the cytoplasm. The enzyme catalyses Release of an N-terminal amino acid, Xaa-|-Yaa-, in which Xaa is preferably Leu, but may be other amino acids including Pro although not Arg or Lys, and Yaa may be Pro. Amino acid amides and methyl esters are also readily hydrolyzed, but rates on arylamides are exceedingly low.. It carries out the reaction Release of an N-terminal amino acid, preferentially leucine, but not glutamic or aspartic acids.. Functionally, presumably involved in the processing and regular turnover of intracellular proteins. Catalyzes the removal of unsubstituted N-terminal amino acids from various peptides. This chain is Probable cytosol aminopeptidase, found in Pseudomonas aeruginosa (strain UCBPP-PA14).